The sequence spans 125 residues: Fluoride-specific ion channel FluC (125 aa).

4 consecutive transmembrane segments (helical) span residues 4–24 (IALV…VGVW), 35–55 (WGTL…VELV), 68–88 (FLVT…LDAV), and 100–120 (AFYI…GLAL). The Na(+) site is built by G75 and T78.

This sequence belongs to the fluoride channel Fluc/FEX (TC 1.A.43) family.

The protein resides in the cell inner membrane. It catalyses the reaction fluoride(in) = fluoride(out). Na(+) is not transported, but it plays an essential structural role and its presence is essential for fluoride channel function. Functionally, fluoride-specific ion channel. Important for reducing fluoride concentration in the cell, thus reducing its toxicity. The chain is Fluoride-specific ion channel FluC from Agrobacterium fabrum (strain C58 / ATCC 33970) (Agrobacterium tumefaciens (strain C58)).